We begin with the raw amino-acid sequence, 357 residues long: S-adenosylmethionine:tRNA ribosyltransferase-isomerase (357 aa).

The protein belongs to the QueA family. As to quaternary structure, monomer.

The protein localises to the cytoplasm. The enzyme catalyses 7-aminomethyl-7-carbaguanosine(34) in tRNA + S-adenosyl-L-methionine = epoxyqueuosine(34) in tRNA + adenine + L-methionine + 2 H(+). The protein operates within tRNA modification; tRNA-queuosine biosynthesis. Functionally, transfers and isomerizes the ribose moiety from AdoMet to the 7-aminomethyl group of 7-deazaguanine (preQ1-tRNA) to give epoxyqueuosine (oQ-tRNA). The polypeptide is S-adenosylmethionine:tRNA ribosyltransferase-isomerase (Buchnera aphidicola subsp. Acyrthosiphon pisum (strain APS) (Acyrthosiphon pisum symbiotic bacterium)).